Consider the following 293-residue polypeptide: 33 kDa chaperonin (293 aa).

2 disulfides stabilise this stretch: Cys-229/Cys-231 and Cys-262/Cys-265.

The protein belongs to the HSP33 family. In terms of processing, under oxidizing conditions two disulfide bonds are formed involving the reactive cysteines. Under reducing conditions zinc is bound to the reactive cysteines and the protein is inactive.

The protein resides in the cytoplasm. Redox regulated molecular chaperone. Protects both thermally unfolding and oxidatively damaged proteins from irreversible aggregation. Plays an important role in the bacterial defense system toward oxidative stress. The sequence is that of 33 kDa chaperonin from Methylobacillus flagellatus (strain ATCC 51484 / DSM 6875 / VKM B-1610 / KT).